The sequence spans 404 residues: MNREPDSTVEQQHGSGHLENDAERDTLDFSRQIKTEDFSEALQTGIPHRPCHLSQASMMGGGQMTGEMTSLHPLQQLVLVPSHLQSASQYLLSQSQSGQQGLYQPNHLSLPQQQGGILQPQTGLGLASQAVGRPGLPGSSLESHLEMGHLHAPKHLSVVSDEPSDLEELEKFAKTFKQRRIKLGFTQGDVGLAMGKLYGNDFSQTTISRFEALNLSFKNMCKLKPLLEKWLNDAESAPSDTALTPSANYAQLSEMFGRKRKKRTSIETNIRLTLEKRFQDNPKPSSEEISMIAEQLVMEKEVVRVWFCNRRQKEKRINCPMNLPLKSPVYNSRMVPTSGSLGSMSMTVTSSCSPGNSSRPSSPTCGLQPCSPGSSLISSKPTVNTSGYSNSSSWYRWNHSQYFH.

Disordered regions lie at residues Met-1–Phe-29 and Thr-44–Glu-67. Residues Gly-16–Phe-29 show a composition bias toward basic and acidic residues. Residues Gln-187–Glu-235 form the POU-specific domain. The homeobox DNA-binding region spans Lys-259 to Val-297. Residues Met-346 to Leu-367 form a disordered region. The segment covering Ser-350 to Pro-363 has biased composition (low complexity).

This sequence belongs to the POU transcription factor family. Class-2 subfamily.

The protein localises to the nucleus. Its function is as follows. Transcription factor that binds to the octamer motif (5'-ATTTGCAT-3') and regulates cell type-specific differentiation pathways. This is POU domain, class 2, transcription factor 3L (pou2f3.L) from Xenopus laevis (African clawed frog).